A 418-amino-acid chain; its full sequence is rRNA methyltransferase 3, mitochondrial (418 aa).

Residues M1–V40 constitute a mitochondrion transit peptide. A disordered region spans residues L41 to A90. Residues V47–P58 show a composition bias toward basic and acidic residues. Residues A65–H85 are compositionally biased toward polar residues. 3 residues coordinate S-adenosyl-L-methionine: G354, I378, and L387.

The protein belongs to the class IV-like SAM-binding methyltransferase superfamily. RNA methyltransferase TrmH family.

Its subcellular location is the mitochondrion. It catalyses the reaction guanosine(1370) in 16S rRNA + S-adenosyl-L-methionine = 2'-O-methylguanosine(1370) in 16S rRNA + S-adenosyl-L-homocysteine + H(+). Its function is as follows. S-adenosyl-L-methionine-dependent 2'-O-ribose methyltransferase that catalyzes the formation of 2'-O-methylguanosine at position 1370 (Gm1370) in the 16S mitochondrial large subunit ribosomal RNA (mtLSU rRNA), a conserved modification in the peptidyl transferase domain of the mtLSU rRNA. Also required for formation of 2'-O-methyluridine at position 1369 (Um1369) mediated by MRM2. This chain is rRNA methyltransferase 3, mitochondrial, found in Mus musculus (Mouse).